Consider the following 319-residue polypeptide: Lipoyl synthase (319 aa).

The segment at 1 to 28 is disordered; the sequence is MVVLVDTVSSTPVRPRHPEKAARPDALS. Basic and acidic residues predominate over residues 16–28; the sequence is RHPEKAARPDALS. Cysteine 61, cysteine 66, cysteine 72, cysteine 87, cysteine 91, cysteine 94, and serine 300 together coordinate [4Fe-4S] cluster. The Radical SAM core domain occupies 73–289; the sequence is WDKKHATFMI…AKTAYAKGFL (217 aa).

Belongs to the radical SAM superfamily. Lipoyl synthase family. [4Fe-4S] cluster is required as a cofactor.

It localises to the cytoplasm. The catalysed reaction is [[Fe-S] cluster scaffold protein carrying a second [4Fe-4S](2+) cluster] + N(6)-octanoyl-L-lysyl-[protein] + 2 oxidized [2Fe-2S]-[ferredoxin] + 2 S-adenosyl-L-methionine + 4 H(+) = [[Fe-S] cluster scaffold protein] + N(6)-[(R)-dihydrolipoyl]-L-lysyl-[protein] + 4 Fe(3+) + 2 hydrogen sulfide + 2 5'-deoxyadenosine + 2 L-methionine + 2 reduced [2Fe-2S]-[ferredoxin]. It participates in protein modification; protein lipoylation via endogenous pathway; protein N(6)-(lipoyl)lysine from octanoyl-[acyl-carrier-protein]: step 2/2. Functionally, catalyzes the radical-mediated insertion of two sulfur atoms into the C-6 and C-8 positions of the octanoyl moiety bound to the lipoyl domains of lipoate-dependent enzymes, thereby converting the octanoylated domains into lipoylated derivatives. The sequence is that of Lipoyl synthase from Rhodopseudomonas palustris (strain HaA2).